The chain runs to 477 residues: 3-isopropylmalate dehydratase large subunit (477 aa).

[4Fe-4S] cluster contacts are provided by C352, C413, and C416.

The protein belongs to the aconitase/IPM isomerase family. LeuC type 1 subfamily. In terms of assembly, heterodimer of LeuC and LeuD. [4Fe-4S] cluster serves as cofactor.

It catalyses the reaction (2R,3S)-3-isopropylmalate = (2S)-2-isopropylmalate. It functions in the pathway amino-acid biosynthesis; L-leucine biosynthesis; L-leucine from 3-methyl-2-oxobutanoate: step 2/4. In terms of biological role, catalyzes the isomerization between 2-isopropylmalate and 3-isopropylmalate, via the formation of 2-isopropylmaleate. The polypeptide is 3-isopropylmalate dehydratase large subunit (Pseudomonas putida (strain ATCC 47054 / DSM 6125 / CFBP 8728 / NCIMB 11950 / KT2440)).